The following is a 128-amino-acid chain: Large ribosomal subunit protein bL17 (128 aa).

It belongs to the bacterial ribosomal protein bL17 family. In terms of assembly, part of the 50S ribosomal subunit. Contacts protein L32.

This chain is Large ribosomal subunit protein bL17, found in Petrotoga mobilis (strain DSM 10674 / SJ95).